We begin with the raw amino-acid sequence, 458 residues long: MNMLIVGRVVASVGGSGLQTLCFVIGCTMVGERSRPLVISILSCAFAVAAIVGPIIGGAFTTHVTWRWCFYINLPIGGLAIIMFLLTYKAENKGILQQIKDAIGTISSFTFSKFRHQVNFKRLMNGIIFKFDFFGFALCSAGLVLFLLGLTFGGNKYSWNSGQVIAYLVLGVLLFIFSLVYDFFLFDKFNPEPDNISYRPLLLRRLVAKPAIIIINMVTFLLCTGYNGQMIYSVQFFQLIFASSAWKAGLHLIPIVITNVIAAIASGVITKKLGLVKPLLIFGGVLGVIGAGLMTLMTNTSTKSTQIGVLLLPGFSLGFALQASLMSAQLQITKDRPEAAMDFIEVTAFNTFMKSLGTTLGGVLSTTVFSASFHNKVSRAHLEPYEGKTVDDMILYRLQNYDGSHSTIGNILSDSIKNVFWMDLGFYALGFLFCSFSSNKKLIIPKKDETPEDNLEDK.

The Cytoplasmic segment spans residues 1–9; that stretch reads MNMLIVGRV. A helical transmembrane segment spans residues 10-30; sequence VASVGGSGLQTLCFVIGCTMV. Topologically, residues 31–36 are vacuolar; sequence GERSRP. Residues 37-57 form a helical membrane-spanning segment; it reads LVISILSCAFAVAAIVGPIIG. Topologically, residues 58–67 are cytoplasmic; it reads GAFTTHVTWR. Residues 68-88 form a helical membrane-spanning segment; the sequence is WCFYINLPIGGLAIIMFLLTY. Over 89 to 132 the chain is Vacuolar; sequence KAENKGILQQIKDAIGTISSFTFSKFRHQVNFKRLMNGIIFKFD. The helical transmembrane segment at 133–153 threads the bilayer; sequence FFGFALCSAGLVLFLLGLTFG. Residues 154–163 are Cytoplasmic-facing; sequence GNKYSWNSGQ. A helical transmembrane segment spans residues 164–184; that stretch reads VIAYLVLGVLLFIFSLVYDFF. The Vacuolar portion of the chain corresponds to 185–205; the sequence is LFDKFNPEPDNISYRPLLLRR. Asn195 carries N-linked (GlcNAc...) asparagine glycosylation. Residues 206–226 traverse the membrane as a helical segment; it reads LVAKPAIIIINMVTFLLCTGY. Residues 227 to 248 lie on the Cytoplasmic side of the membrane; it reads NGQMIYSVQFFQLIFASSAWKA. The chain crosses the membrane as a helical span at residues 249-269; sequence GLHLIPIVITNVIAAIASGVI. Residues 270–277 are Vacuolar-facing; that stretch reads TKKLGLVK. Residues 278 to 298 form a helical membrane-spanning segment; sequence PLLIFGGVLGVIGAGLMTLMT. Residues 299–306 lie on the Cytoplasmic side of the membrane; the sequence is NTSTKSTQ. A helical transmembrane segment spans residues 307–327; it reads IGVLLLPGFSLGFALQASLMS. Over 328 to 415 the chain is Vacuolar; that stretch reads AQLQITKDRP…STIGNILSDS (88 aa). Residues 416-436 form a helical membrane-spanning segment; that stretch reads IKNVFWMDLGFYALGFLFCSF. Residues 437–458 lie on the Cytoplasmic side of the membrane; it reads SSNKKLIIPKKDETPEDNLEDK.

The protein belongs to the major facilitator superfamily.

The protein resides in the vacuole membrane. In terms of biological role, transporter required for vacuolar uptake of histidine and lysine. The chain is Vacuolar basic amino acid transporter 3 (VBA3) from Saccharomyces cerevisiae (strain ATCC 204508 / S288c) (Baker's yeast).